The primary structure comprises 417 residues: Phosphoglycerate kinase, cytosolic (417 aa).

(2R)-3-phosphoglycerate-binding residues include Val-23, Asp-24, Phe-25, Asn-26, Arg-39, Ser-61, His-62, Gly-64, Arg-65, Arg-132, His-168, and Arg-169. ADP contacts are provided by Gly-214 and Ala-215. Residue Gly-214 coordinates CDP. AMP is bound by residues Ala-215 and Lys-216. Residue Ala-215 participates in ATP binding. Ala-215 is a Mg(2+) binding site. Lys-216 is a binding site for (2R)-3-phosphoglycerate. Residue Asp-219 coordinates CDP. Residue Asp-219 participates in Mg(2+) binding. ADP contacts are provided by Lys-220 and Gly-238. Lys-220 lines the AMP pocket. Lys-220 is an ATP binding site. Residue Gly-238 coordinates CDP. The AMP site is built by Ala-239 and Ala-311. ATP contacts are provided by Ala-239 and Ala-311. Residues Ala-311 and Asn-335 each coordinate ADP. CDP is bound by residues Gly-336 and Phe-341. Positions 341, 342, 374, and 375 each coordinate ADP. Glu-342 provides a ligand contact to AMP. Glu-342, Asp-374, and Ser-375 together coordinate ATP. Asp-374 contacts Mg(2+).

This sequence belongs to the phosphoglycerate kinase family. As to quaternary structure, monomer. The cofactor is Mg(2+).

The protein resides in the cytoplasm. The catalysed reaction is (2R)-3-phosphoglycerate + ATP = (2R)-3-phospho-glyceroyl phosphate + ADP. The protein operates within carbohydrate degradation; glycolysis; pyruvate from D-glyceraldehyde 3-phosphate: step 2/5. The sequence is that of Phosphoglycerate kinase, cytosolic (PGKB) from Leishmania major.